Reading from the N-terminus, the 372-residue chain is MDSAIQSAKRIIIKVGSSLVTNDGKGLDTAAIQKWAEQIVQLRALGKEVVLVSSGAIAEGMQRLGFDKRPTGVHELQACAAVGQMGLAQIYETSFRQHQVQTAQILLTHADLADRERYLNARSTLFTLLQLGVVPIINENDTVVTDEIKFGDNDTLGALVANLIEADALIILTDQRGLFSADPRKDPHATFIHEAQAGDVELEAMAGGAGSSLGRGGMLTKILAAKRAALSGAHTVIAWGREEQVLTRLAAGEAIGTQLTAQTAQLTARKQWMADHLHTAGRIVLDQGAVLKLTAEGKSLLPIGVIEVSGSFGRGDVITCVDQSGRAIARGITNYTSSEARRIMRKPSTDILSILGFVEEPELIHRDNLVLL.

Residue lysine 14 participates in ATP binding. Positions 54, 141, and 153 each coordinate substrate. 173 to 174 (TD) is a binding site for ATP. The PUA domain occupies 280 to 358 (AGRIVLDQGA…TDILSILGFV (79 aa)).

The protein belongs to the glutamate 5-kinase family.

Its subcellular location is the cytoplasm. It catalyses the reaction L-glutamate + ATP = L-glutamyl 5-phosphate + ADP. It functions in the pathway amino-acid biosynthesis; L-proline biosynthesis; L-glutamate 5-semialdehyde from L-glutamate: step 1/2. Functionally, catalyzes the transfer of a phosphate group to glutamate to form L-glutamate 5-phosphate. The protein is Glutamate 5-kinase of Herminiimonas arsenicoxydans.